Consider the following 255-residue polypeptide: MRPRPIRLLLTALVGAGLAFAPVSAVAAPTATASASADVGALDGCYTWSGTLSEGSSGEAVRQLQIRVAGYPGTGAQLAIDGQFGPATKAAVQRFQSAYGLAADGIAGPATFNKIYQLQDDDCTPVNFTYAELNRCNSDWSGGKVSAATARANALVTMWKLQAMRHAMGDKPITVNGGFRSVTCNSNVGGASNSRHMYGHAADLGAGSQGFCALAQAARNHGFTEILGPGYPGHNDHTHVAGGDGRFWSAPSCGI.

The signal sequence occupies residues Met1–Leu42. Asp43 is modified (blocked amino end (Asp)). 2 cysteine pairs are disulfide-bonded: Cys45-Cys123 and Cys136-Cys184. Position 180 (Arg180) interacts with substrate. Position 196 (His196) interacts with Zn(2+). Cysteines 212 and 253 form a disulfide. The active-site Proton donor is His234. His237 and His239 together coordinate Zn(2+).

Belongs to the peptidase M15 family. It depends on Zn(2+) as a cofactor. In terms of processing, the N-terminus is partially blocked as a result of the cyclization of the first two amino acids into anhydroaspartylglycine imide.

It is found in the secreted. It catalyses the reaction Cleavage of the bond: (Ac)2-L-lysyl-D-alanyl-|-D-alanine.. Functionally, this enzyme catalyzes carboxypeptidation and transpeptidation reactions involved in bacterial cell wall metabolism. It effectively catalyzes the transfer of the N-alpha, N-epsilon-diacetyl-L-lysyl-D-alanyl electrophilic group of the standard tripeptide substrate N-alpha,N-epsilon-diacetyl-L-lysyl-D-alanyl-D-alanine to water. It also performs a weak beta-lactamase activity, hydrolyzing penicillin into penicilloate at a very low rate. This Streptomyces albus G protein is Zinc D-Ala-D-Ala carboxypeptidase.